The sequence spans 102 residues: MAKKSMIQKNLRRIKLCDQYRERREELKSIMNNKDLSIAKRFAAQSKLIKKLPRDSSKIRIRNRCALTGRPRGVYRKFGLCRIVLRDLCSFGQVPGVTKSSW.

It belongs to the universal ribosomal protein uS14 family. Part of the 30S ribosomal subunit. Contacts proteins S3 and S10.

Binds 16S rRNA, required for the assembly of 30S particles and may also be responsible for determining the conformation of the 16S rRNA at the A site. This chain is Small ribosomal subunit protein uS14, found in Wolbachia pipientis subsp. Culex pipiens (strain wPip).